A 344-amino-acid chain; its full sequence is tRNA N6-adenosine threonylcarbamoyltransferase (344 aa).

Positions 110 and 114 each coordinate Fe cation. Residues 133–137 (VVSGA), D166, G179, and N278 contribute to the substrate site. Residue D303 coordinates Fe cation.

Belongs to the KAE1 / TsaD family. The cofactor is Fe(2+).

Its subcellular location is the cytoplasm. It carries out the reaction L-threonylcarbamoyladenylate + adenosine(37) in tRNA = N(6)-L-threonylcarbamoyladenosine(37) in tRNA + AMP + H(+). In terms of biological role, required for the formation of a threonylcarbamoyl group on adenosine at position 37 (t(6)A37) in tRNAs that read codons beginning with adenine. Is involved in the transfer of the threonylcarbamoyl moiety of threonylcarbamoyl-AMP (TC-AMP) to the N6 group of A37, together with TsaE and TsaB. TsaD likely plays a direct catalytic role in this reaction. The protein is tRNA N6-adenosine threonylcarbamoyltransferase of Chlamydia abortus (strain DSM 27085 / S26/3) (Chlamydophila abortus).